The following is a 493-amino-acid chain: Glutamyl-tRNA(Gln) amidotransferase subunit A (493 aa).

Residues lysine 79 and serine 159 each act as charge relay system in the active site. Serine 183 (acyl-ester intermediate) is an active-site residue.

Belongs to the amidase family. GatA subfamily. Heterotrimer of A, B and C subunits.

The catalysed reaction is L-glutamyl-tRNA(Gln) + L-glutamine + ATP + H2O = L-glutaminyl-tRNA(Gln) + L-glutamate + ADP + phosphate + H(+). In terms of biological role, allows the formation of correctly charged Gln-tRNA(Gln) through the transamidation of misacylated Glu-tRNA(Gln) in organisms which lack glutaminyl-tRNA synthetase. The reaction takes place in the presence of glutamine and ATP through an activated gamma-phospho-Glu-tRNA(Gln). This chain is Glutamyl-tRNA(Gln) amidotransferase subunit A, found in Agrobacterium fabrum (strain C58 / ATCC 33970) (Agrobacterium tumefaciens (strain C58)).